A 139-amino-acid polypeptide reads, in one-letter code: Aspartate 1-decarboxylase (139 aa).

Ser26 (schiff-base intermediate with substrate; via pyruvic acid) is an active-site residue. The residue at position 26 (Ser26) is a Pyruvic acid (Ser). Thr58 contributes to the substrate binding site. Tyr59 acts as the Proton donor in catalysis. 72–74 (GGA) provides a ligand contact to substrate.

It belongs to the PanD family. As to quaternary structure, heterooctamer of four alpha and four beta subunits. Pyruvate serves as cofactor. Post-translationally, is synthesized initially as an inactive proenzyme, which is activated by self-cleavage at a specific serine bond to produce a beta-subunit with a hydroxyl group at its C-terminus and an alpha-subunit with a pyruvoyl group at its N-terminus.

The protein localises to the cytoplasm. It catalyses the reaction L-aspartate + H(+) = beta-alanine + CO2. Its pathway is cofactor biosynthesis; (R)-pantothenate biosynthesis; beta-alanine from L-aspartate: step 1/1. In terms of biological role, catalyzes the pyruvoyl-dependent decarboxylation of aspartate to produce beta-alanine. This chain is Aspartate 1-decarboxylase, found in Microcystis aeruginosa (strain NIES-843 / IAM M-2473).